Here is a 321-residue protein sequence, read N- to C-terminus: Ubiquinone biosynthesis O-methyltransferase, mitochondrial (321 aa).

The S-adenosyl-L-methionine site is built by R102, G135, D157, and L210. Mg(2+)-binding residues include E211, E214, and H215.

It belongs to the class I-like SAM-binding methyltransferase superfamily. UbiG/COQ3 family. In terms of assembly, component of a multi-subunit COQ enzyme complex. It depends on Mg(2+) as a cofactor.

The protein resides in the mitochondrion inner membrane. The enzyme catalyses a 3,4-dihydroxy-5-(all-trans-polyprenyl)benzoate + S-adenosyl-L-methionine = a 4-hydroxy-3-methoxy-5-(all-trans-polyprenyl)benzoate + S-adenosyl-L-homocysteine + H(+). It catalyses the reaction a 3-demethylubiquinone + S-adenosyl-L-methionine = a ubiquinone + S-adenosyl-L-homocysteine. It carries out the reaction a 3-demethylubiquinol + S-adenosyl-L-methionine = a ubiquinol + S-adenosyl-L-homocysteine + H(+). The protein operates within cofactor biosynthesis; ubiquinone biosynthesis. In terms of biological role, O-methyltransferase required for two non-consecutive steps during ubiquinone biosynthesis. Catalyzes the 2 O-methylation of 3,4-dihydroxy-5-(all-trans-polyprenyl)benzoic acid into 4-hydroxy-3-methoxy-5-(all-trans-polyprenyl)benzoic acid. Also catalyzes the last step of ubiquinone biosynthesis by mediating methylation of 3-demethylubiquinone into ubiquinone. Also able to mediate the methylation of 3-demethylubiquinol into ubiquinol. The polypeptide is Ubiquinone biosynthesis O-methyltransferase, mitochondrial (Dictyostelium discoideum (Social amoeba)).